The primary structure comprises 130 residues: Small ribosomal subunit protein uS8 (130 aa).

It belongs to the universal ribosomal protein uS8 family. As to quaternary structure, part of the 30S ribosomal subunit. Contacts proteins S5 and S12.

Its function is as follows. One of the primary rRNA binding proteins, it binds directly to 16S rRNA central domain where it helps coordinate assembly of the platform of the 30S subunit. This Vibrio atlanticus (strain LGP32) (Vibrio splendidus (strain Mel32)) protein is Small ribosomal subunit protein uS8.